Reading from the N-terminus, the 122-residue chain is MAVPGYYELYRRSTIGNSLVDALDTLISDGRIEASLAMRVLETFDKVVAETLKDNTQSKLTVKGNLDTYGFCDDVWTFIVKNCQVTVEDSHRDASQNGSGDSQSVISVDKLRIVACNSKKSE.

2 positions are modified to phosphoserine: S95 and S102.

The protein belongs to the TFIIA subunit 2 family. As to quaternary structure, TFIIA is a heterodimer composed of the large TOA1 and a small TOA2 subunits. Interacts with TBP. Interacts with TAF11. Interacts with KAP122.

The protein localises to the cytoplasm. The protein resides in the nucleus. TFIIA is a component of the transcription machinery of RNA polymerase II and plays an important role in transcriptional activation. TFIIA in a complex with TBP mediates transcriptional activity. The polypeptide is Transcription initiation factor IIA subunit 2 (TOA2) (Saccharomyces cerevisiae (strain ATCC 204508 / S288c) (Baker's yeast)).